A 293-amino-acid polypeptide reads, in one-letter code: Ribosomal protein L11 methyltransferase (293 aa).

S-adenosyl-L-methionine is bound by residues Thr145, Gly166, Asp188, and Asn230.

Belongs to the methyltransferase superfamily. PrmA family.

It localises to the cytoplasm. The catalysed reaction is L-lysyl-[protein] + 3 S-adenosyl-L-methionine = N(6),N(6),N(6)-trimethyl-L-lysyl-[protein] + 3 S-adenosyl-L-homocysteine + 3 H(+). In terms of biological role, methylates ribosomal protein L11. This is Ribosomal protein L11 methyltransferase from Escherichia coli O7:K1 (strain IAI39 / ExPEC).